A 96-amino-acid chain; its full sequence is Aspartyl/glutamyl-tRNA(Asn/Gln) amidotransferase subunit C (96 aa).

The protein belongs to the GatC family. As to quaternary structure, heterotrimer of A, B and C subunits.

It carries out the reaction L-glutamyl-tRNA(Gln) + L-glutamine + ATP + H2O = L-glutaminyl-tRNA(Gln) + L-glutamate + ADP + phosphate + H(+). It catalyses the reaction L-aspartyl-tRNA(Asn) + L-glutamine + ATP + H2O = L-asparaginyl-tRNA(Asn) + L-glutamate + ADP + phosphate + 2 H(+). In terms of biological role, allows the formation of correctly charged Asn-tRNA(Asn) or Gln-tRNA(Gln) through the transamidation of misacylated Asp-tRNA(Asn) or Glu-tRNA(Gln) in organisms which lack either or both of asparaginyl-tRNA or glutaminyl-tRNA synthetases. The reaction takes place in the presence of glutamine and ATP through an activated phospho-Asp-tRNA(Asn) or phospho-Glu-tRNA(Gln). This chain is Aspartyl/glutamyl-tRNA(Asn/Gln) amidotransferase subunit C, found in Geobacillus kaustophilus (strain HTA426).